Reading from the N-terminus, the 107-residue chain is uncharacterized protein (107 aa).

It localises to the mitochondrion. This is an uncharacterized protein from Arabidopsis thaliana (Mouse-ear cress).